The chain runs to 238 residues: Probable transcriptional regulatory protein CT_457 (238 aa).

The interval 1–21 is disordered; that stretch reads MAGHSKWANTKHRKERADHKK. Basic residues predominate over residues 9–21; it reads NTKHRKERADHKK.

Belongs to the TACO1 family.

It localises to the cytoplasm. This is Probable transcriptional regulatory protein CT_457 from Chlamydia trachomatis serovar D (strain ATCC VR-885 / DSM 19411 / UW-3/Cx).